The primary structure comprises 172 residues: Envelope protein UL45 (172 aa).

Topologically, residues 1 to 27 are intravirion; the sequence is MPLRASEHAYRPLGPGTPPVRARLPAA. A helical; Signal-anchor for type II membrane protein transmembrane segment spans residues 28–48; that stretch reads AWVGVGTIIGGVVIIAALVLV. Residues 49-172 lie on the Virion surface side of the membrane; sequence PSRASWALSP…TSTRNALGLP (124 aa).

It belongs to the herpesviridae HHV-1 UL45 family.

The protein localises to the virion membrane. Its function is as follows. Important virulence factor of HSV neurotropism. Seems to be required for glycoprotein B-induced fusion. Dispensable for growth in vitro. The sequence is that of Envelope protein UL45 from Homo sapiens (Human).